The chain runs to 624 residues: MNKSLRFSHKILLAASLIVILAFSLFTLYNDYLQRNAIREDLENYLAEMGASTSTNIRNLFEGRIKLVENLAQNIAQDPANAETLMGQNALISSFLTVYLGKVDGGFSVRPDAKMPDGYDPRTRPWYKDGMNASGATLTEPYIDMTTNKMVIGILSKVSSSVGVVGGDLALDGLVQIINSLNFGGMGYAFLVNDQGKILVHPDKDLVMKSLSDLFPQHTPKLTGELTEVQSDGQTRLLTFSPITGLPSANWYIGLSVDKDKAFSMLSTFRTSAVIATVVAVVIIIGLLGLLIRVLMQPLHTMTRAMEDIAEGEGDLTKRLHIHSHDEFGVLGNAFNRFVERIHSSIREVSSATEQVNEVALRVISASNSSMTNSDEQSNRTNSVAAAINELGAAAQEIAGNAAQASQHASSARLLAEEGQQVVERNIAAMNRLSDLIVTSSAHIETLNSKTVNIGQILEVITSISQQTNLLALNAAIEAARAGEAGRGFAVVADEVRNLAHRTQESAQQVQTMIEELQVGARESVDTMEQSQRHSQDSMQIANQAGERLDSVTVRIGEIDGMNQSVATATEEQTAVVEAINMDINEINMLNQEGVENLQATLRACSDLEQQAGRLKHLVGSFRI.

A helical membrane pass occupies residues 11-31; the sequence is ILLAASLIVILAFSLFTLYND. Positions 36-254 constitute a Cache domain; that stretch reads NAIREDLENY…GLPSANWYIG (219 aa). Residues 272-292 form a helical membrane-spanning segment; the sequence is SAVIATVVAVVIIIGLLGLLI. Residues 293–347 form the HAMP domain; sequence RVLMQPLHTMTRAMEDIAEGEGDLTKRLHIHSHDEFGVLGNAFNRFVERIHSSIR. The region spanning 352-588 is the Methyl-accepting transducer domain; it reads ATEQVNEVAL…AINMDINEIN (237 aa).

Belongs to the methyl-accepting chemotaxis (MCP) protein family.

It is found in the cell membrane. Its function is as follows. Chemotactic-signal transducers respond to changes in the concentration of attractants and repellents in the environment, transduce a signal from the outside to the inside of the cell, and facilitate sensory adaptation through the variation of the level of methylation. McpG is a specific gamma-aminobutyric acid (GABA) chemoreceptor that recognizes GABA over a wide range of environmental conditions. Contributes to attraction to and colonization of plant roots. The sequence is that of Methyl-accepting chemotaxis protein McpG from Pseudomonas putida (strain ATCC 47054 / DSM 6125 / CFBP 8728 / NCIMB 11950 / KT2440).